The primary structure comprises 313 residues: Pantothenate synthetase (313 aa).

43 to 50 contacts ATP; that stretch reads MGALHEGH. His-50 (proton donor) is an active-site residue. Gln-75 contributes to the (R)-pantoate binding site. Gln-75 serves as a coordination point for beta-alanine. 161–164 contacts ATP; sequence GEKD. Residue Gln-167 coordinates (R)-pantoate. Residues Val-190 and 198 to 201 contribute to the ATP site; that span reads LSSR.

Belongs to the pantothenate synthetase family. As to quaternary structure, homodimer.

It is found in the cytoplasm. It catalyses the reaction (R)-pantoate + beta-alanine + ATP = (R)-pantothenate + AMP + diphosphate + H(+). Its pathway is cofactor biosynthesis; (R)-pantothenate biosynthesis; (R)-pantothenate from (R)-pantoate and beta-alanine: step 1/1. Catalyzes the condensation of pantoate with beta-alanine in an ATP-dependent reaction via a pantoyl-adenylate intermediate. The protein is Pantothenate synthetase of Mycobacterium sp. (strain JLS).